The following is a 388-amino-acid chain: Succinate--CoA ligase [ADP-forming] subunit beta (388 aa).

Residues 9-244 (KQLFARYGLP…QSQEDPREAQ (236 aa)) form the ATP-grasp domain. Residues K46, 53 to 55 (GRG), E99, T102, and E107 each bind ATP. N199 and D213 together coordinate Mg(2+). Residues N264 and 321-323 (GIV) each bind substrate.

It belongs to the succinate/malate CoA ligase beta subunit family. As to quaternary structure, heterotetramer of two alpha and two beta subunits. The cofactor is Mg(2+).

It carries out the reaction succinate + ATP + CoA = succinyl-CoA + ADP + phosphate. The catalysed reaction is GTP + succinate + CoA = succinyl-CoA + GDP + phosphate. The protein operates within carbohydrate metabolism; tricarboxylic acid cycle; succinate from succinyl-CoA (ligase route): step 1/1. Functionally, succinyl-CoA synthetase functions in the citric acid cycle (TCA), coupling the hydrolysis of succinyl-CoA to the synthesis of either ATP or GTP and thus represents the only step of substrate-level phosphorylation in the TCA. The beta subunit provides nucleotide specificity of the enzyme and binds the substrate succinate, while the binding sites for coenzyme A and phosphate are found in the alpha subunit. This is Succinate--CoA ligase [ADP-forming] subunit beta from Salmonella dublin (strain CT_02021853).